The primary structure comprises 208 residues: Myosin light chain 6B (208 aa).

Residues 1–51 are disordered; the sequence is MPPKKDVPVKKPAGPSISKPAAKPAAAGAPPAKTKAEPAVPQAPQKTQEPP. Over residues 10 to 40 the composition is skewed to low complexity; that stretch reads KKPAGPSISKPAAKPAAAGAPPAKTKAEPAV. 3 consecutive EF-hand domains span residues 64–99, 141–176, and 176–208; these read DQLE…LGQN, GTYE…LGEK, and KMTE…ILSV.

Myosin is a hexamer of 2 heavy chains and 4 light chains.

In terms of biological role, regulatory light chain of myosin. Does not bind calcium. In Homo sapiens (Human), this protein is Myosin light chain 6B (MYL6B).